The primary structure comprises 330 residues: 4-hydroxythreonine-4-phosphate dehydrogenase (330 aa).

Thr-133 contacts substrate. Residues His-161, His-206, and His-261 each coordinate a divalent metal cation. Residues Lys-269, Asn-278, and Arg-287 each coordinate substrate.

It belongs to the PdxA family. In terms of assembly, homodimer. It depends on Zn(2+) as a cofactor. Requires Mg(2+) as cofactor. Co(2+) serves as cofactor.

It localises to the cytoplasm. The enzyme catalyses 4-(phosphooxy)-L-threonine + NAD(+) = 3-amino-2-oxopropyl phosphate + CO2 + NADH. Its pathway is cofactor biosynthesis; pyridoxine 5'-phosphate biosynthesis; pyridoxine 5'-phosphate from D-erythrose 4-phosphate: step 4/5. Catalyzes the NAD(P)-dependent oxidation of 4-(phosphooxy)-L-threonine (HTP) into 2-amino-3-oxo-4-(phosphooxy)butyric acid which spontaneously decarboxylates to form 3-amino-2-oxopropyl phosphate (AHAP). The chain is 4-hydroxythreonine-4-phosphate dehydrogenase from Xylella fastidiosa (strain Temecula1 / ATCC 700964).